Reading from the N-terminus, the 629-residue chain is MYLERIDSPQDLKRLSVPELEKLAEEIREAIIEVVLGKTGGHFAPNLGTVELTLALHYVFDSPRDKIVWDVGHQAYPHKLVTGRRDRFHTIRQEGGLSGFLQREESPHDHFGAGHASTSISAALGMAVAAKLRGDRYHTIAVIGDGALTGGMAYEALNHAGALQVPLIVVLNDNEMSIAPNVGALARYLTRVRTDTRYRQAKVEIERLLRRLPQGERLVELSHRFLDGLKEVVYRTMIWEELGFTYIGPIDGHNLRELIETFQLVKTFDSPVFVHVLTVKGKGYQPAEDDPFKHHSAAVKVPGAPPTPPRYQDVFGQTLVELAAKNDRIVAITAAMPDGTGLLPFAAAYPDRFFDVGIAEQHAVTFAAGLATQGLRPVCAIYSTFLQRAYDQVIHDVCIQKLPVVFAMDRAGLVGEDGRTHHGVFDVAYLRCLPNMVLMAPKDEDELRHMLATALAYEEGPIALRYPRGSGVGVPMLGEPRVLPIGRAELLREGSDVAIVALGATVLPAERAADILAERGIRATVINARFVKPLDRSLILDAARECGCLVTVEEAQLAGGFGSAVLETLADAGLLIPVLRLGLADRFFDHASQASLRRQAGIDAESIASRTLAFLATHGRIETGAISDR.

Residues histidine 73 and 114–116 (GHA) contribute to the thiamine diphosphate site. A Mg(2+)-binding site is contributed by aspartate 145. Thiamine diphosphate contacts are provided by residues 146-147 (GA), asparagine 174, tyrosine 284, and glutamate 360. Asparagine 174 contacts Mg(2+).

Belongs to the transketolase family. DXPS subfamily. In terms of assembly, homodimer. It depends on Mg(2+) as a cofactor. The cofactor is thiamine diphosphate.

The catalysed reaction is D-glyceraldehyde 3-phosphate + pyruvate + H(+) = 1-deoxy-D-xylulose 5-phosphate + CO2. It participates in metabolic intermediate biosynthesis; 1-deoxy-D-xylulose 5-phosphate biosynthesis; 1-deoxy-D-xylulose 5-phosphate from D-glyceraldehyde 3-phosphate and pyruvate: step 1/1. Catalyzes the acyloin condensation reaction between C atoms 2 and 3 of pyruvate and glyceraldehyde 3-phosphate to yield 1-deoxy-D-xylulose-5-phosphate (DXP). The polypeptide is 1-deoxy-D-xylulose-5-phosphate synthase (Thermomicrobium roseum (strain ATCC 27502 / DSM 5159 / P-2)).